The primary structure comprises 239 residues: 2,3,4,5-tetrahydropyridine-2,6-dicarboxylate N-acetyltransferase (239 aa).

This sequence belongs to the transferase hexapeptide repeat family. DapH subfamily.

The enzyme catalyses (S)-2,3,4,5-tetrahydrodipicolinate + acetyl-CoA + H2O = L-2-acetamido-6-oxoheptanedioate + CoA. It functions in the pathway amino-acid biosynthesis; L-lysine biosynthesis via DAP pathway; LL-2,6-diaminopimelate from (S)-tetrahydrodipicolinate (acetylase route): step 1/3. Its function is as follows. Catalyzes the transfer of an acetyl group from acetyl-CoA to tetrahydrodipicolinate. This Staphylococcus haemolyticus (strain JCSC1435) protein is 2,3,4,5-tetrahydropyridine-2,6-dicarboxylate N-acetyltransferase.